The chain runs to 369 residues: MKSGRFIGVMSGTSLDGVDVVLATIDEHRVAQLASLSWPIPVSLKQAVLDICQGQQLTLSQFGQLDTQLGRLFADAVNALLKEQNLQARDIVAIGCHGQTVWHEPTGVAPHTLQIGDNNQIVARTGITVVGDFRRRDIALGGQGAPLVPAFHHALLAHSTERRMVLNIGGIANLSLLIPGQPVGGYDTGPGNMLMDAWIWRQAGKPYDKDAEWARAGKVILPLLQNMLSDPYFSQPAPKSTGREYFNYGWLERHLRHFPGVDPRDVQATLAELTAVTISEQVLLSGGCERLMVCGGGSRNPLLMARLAALLPGTEVTTTDAVGISGDDMEALAFAWLAWRTLAGLPGNLPSVTGASQETVLGAIFPANP.

Position 12–19 (Gly-12–Asp-19) interacts with ATP.

The protein belongs to the anhydro-N-acetylmuramic acid kinase family.

The catalysed reaction is 1,6-anhydro-N-acetyl-beta-muramate + ATP + H2O = N-acetyl-D-muramate 6-phosphate + ADP + H(+). Its pathway is amino-sugar metabolism; 1,6-anhydro-N-acetylmuramate degradation. It participates in cell wall biogenesis; peptidoglycan recycling. In terms of biological role, catalyzes the specific phosphorylation of 1,6-anhydro-N-acetylmuramic acid (anhMurNAc) with the simultaneous cleavage of the 1,6-anhydro ring, generating MurNAc-6-P. Is required for the utilization of anhMurNAc either imported from the medium or derived from its own cell wall murein, and thus plays a role in cell wall recycling. The polypeptide is Anhydro-N-acetylmuramic acid kinase (Escherichia coli (strain SE11)).